Here is a 511-residue protein sequence, read N- to C-terminus: MDINPSEVTKILKEQIKKFGDKAEVTEVGQVLSVGDGIARVYGLDNVQAGEMVEFSDGSKGMALNLESENVGVVIFGDDRKIKEGDVVKRTGSIVDTPVGKELLGRVVDGLGNPIDGKGALDKATKRSRVEVKAPGIIPRQSVSEPMQTGLKSIDSLVPVGRGQRELIIGDRQTGKTAVAIDAIINQKKINESGDEKQKLYCIYVAIGQKRSTVRQIQKTLEEAGAMEYTTIVAATASDAAPLQFLAPYTGCTMGEYYRDNGMHALIIYDDLSKQAVAYRQMSLLLRRPPGREAYPGDVFYLHSRLLERAAKLSDEHGGGSLTALPIIETQGGDVSAFIPTNVISITDGQIFLETELFNQGIRPAINVGLSVSRVGSAAQTKAMKKVSGSMKLELAQYREMAAFAQFGSDLDASTQKLLNRGSKLTELLKQKQYSPMTVAEQVISVFCGVKGYLDDVELKDIAEFESKIIEKCKSEKPEILESVLSSGKLEEDTEKSLVDTIMELKKNFNS.

170 to 177 (GDRQTGKT) provides a ligand contact to ATP.

Belongs to the ATPase alpha/beta chains family. In terms of assembly, F-type ATPases have 2 components, CF(1) - the catalytic core - and CF(0) - the membrane proton channel. CF(1) has five subunits: alpha(3), beta(3), gamma(1), delta(1), epsilon(1). CF(0) has three main subunits: a(1), b(2) and c(9-12). The alpha and beta chains form an alternating ring which encloses part of the gamma chain. CF(1) is attached to CF(0) by a central stalk formed by the gamma and epsilon chains, while a peripheral stalk is formed by the delta and b chains.

It is found in the cell inner membrane. The enzyme catalyses ATP + H2O + 4 H(+)(in) = ADP + phosphate + 5 H(+)(out). Functionally, produces ATP from ADP in the presence of a proton gradient across the membrane. The alpha chain is a regulatory subunit. This Pelagibacter ubique (strain HTCC1062) protein is ATP synthase subunit alpha.